The chain runs to 251 residues: Pyridoxine 5'-phosphate synthase (251 aa).

Asn-7 lines the 3-amino-2-oxopropyl phosphate pocket. 9-10 (DH) contributes to the 1-deoxy-D-xylulose 5-phosphate binding site. Arg-18 serves as a coordination point for 3-amino-2-oxopropyl phosphate. The active-site Proton acceptor is the His-43. 1-deoxy-D-xylulose 5-phosphate contacts are provided by Arg-45 and His-50. Glu-70 serves as the catalytic Proton acceptor. Thr-100 contributes to the 1-deoxy-D-xylulose 5-phosphate binding site. His-198 acts as the Proton donor in catalysis. Residues Ala-199 and 220 to 221 (GH) contribute to the 3-amino-2-oxopropyl phosphate site.

It belongs to the PNP synthase family. Homooctamer; tetramer of dimers.

The protein localises to the cytoplasm. It catalyses the reaction 3-amino-2-oxopropyl phosphate + 1-deoxy-D-xylulose 5-phosphate = pyridoxine 5'-phosphate + phosphate + 2 H2O + H(+). It participates in cofactor biosynthesis; pyridoxine 5'-phosphate biosynthesis; pyridoxine 5'-phosphate from D-erythrose 4-phosphate: step 5/5. In terms of biological role, catalyzes the complicated ring closure reaction between the two acyclic compounds 1-deoxy-D-xylulose-5-phosphate (DXP) and 3-amino-2-oxopropyl phosphate (1-amino-acetone-3-phosphate or AAP) to form pyridoxine 5'-phosphate (PNP) and inorganic phosphate. This is Pyridoxine 5'-phosphate synthase from Dechloromonas aromatica (strain RCB).